A 316-amino-acid chain; its full sequence is Ribosomal protein L11 methyltransferase (316 aa).

The S-adenosyl-L-methionine site is built by threonine 160, glycine 181, aspartate 203, and asparagine 246.

This sequence belongs to the methyltransferase superfamily. PrmA family.

It localises to the cytoplasm. The enzyme catalyses L-lysyl-[protein] + 3 S-adenosyl-L-methionine = N(6),N(6),N(6)-trimethyl-L-lysyl-[protein] + 3 S-adenosyl-L-homocysteine + 3 H(+). Its function is as follows. Methylates ribosomal protein L11. The polypeptide is Ribosomal protein L11 methyltransferase (Heliobacterium modesticaldum (strain ATCC 51547 / Ice1)).